Consider the following 654-residue polypeptide: Neuroendocrine convertase 2 (654 aa).

The signal sequence occupies residues M1–A21. The propeptide occupies G22–K121. Residues Q158 to V483 enclose the Peptidase S8 domain. N189 carries an N-linked (GlcNAc...) asparagine glycan. Active-site charge relay system residues include D196 and H237. 2 disulfide bridges follow: C254–C404 and C346–C376. N312 is a glycosylation site (N-linked (GlcNAc...) asparagine). The active-site Charge relay system is the S412. A P/Homo B domain is found at S491–A627. An intrachain disulfide couples C498 to C524. N544 carries N-linked (GlcNAc...) asparagine glycosylation.

It belongs to the peptidase S8 family. Furin subfamily. Expressed in the central nervous system (CNS) and midgut endocrine cells of third instar larva (at protein level). In the CNS, expressed in the CA-LP1 and CA-LP2 neurons which innervate the corpus allatum, and in the CC-MS2 neurons which innervate the corpora cardiaca of the ring gland. Also expressed in the CC-MS1, SP3, Tv and Va neurons. Expressed in Akh-producing cells of the corpora cardiaca. In the embryo, restricted to the final stages of embryogenesis where expression is found in anterior sensory structures and in only 168 cells in the brain and ventral nerve cord. After larvae hatch, the sensory structures and most cells in the CNS turn off or substantially reduce expression. In third instar larva, expressed at higher levels in the anterior section than in the posterior section. Little expression is detected in the adult head. In the developing eye, expressed at higher levels in pale-type R7 photoreceptor cells than in yellow-type R7 cells although expression is not seen in all pale-type R7 cells. Also expressed in outer photoreceptor cells.

It is found in the secreted. It catalyses the reaction Release of protein hormones and neuropeptides from their precursors, generally by hydrolysis of -Lys-Arg-|- bonds.. Functionally, serine endopeptidase which is involved in the processing of hormone and other protein precursors at sites comprised of pairs of basic amino acid residues. Required during embryonic and larval development, probably by proteolytically processing peptide hormones involved in hatching, larval growth and larval molting. Required for the processing and activation of Akh which maintains normal hemolymph sugar levels. Has been shown in one study to be required for processing of sli into slit N-product and slit C-product in the embryo which is necessary for lateral transverse muscle elongation but has been shown in another study not to be required for sli cleavage. Required for larval hatching. Also required for normal larval wandering behavior which occurs prior to pupariation. Required during pupal development for head eversion, leg and wing disk extension, and abdominal differentiation. Required during eye development for R8 photoreceptor cell specification by regulating processing of ligands required for the BMP and activin signaling pathways. The polypeptide is Neuroendocrine convertase 2 (Drosophila melanogaster (Fruit fly)).